Here is an 80-residue protein sequence, read N- to C-terminus: Omega-conotoxin-like 1 (80 aa).

Residues 1–22 form the signal peptide; that stretch reads MKLTCVLIVVVLFLTACQLITT. Residues 23-49 constitute a propeptide that is removed on maturation; that stretch reads DDSTGKQRYQAWKLRSKMQNSVLSRLS. Intrachain disulfides connect Cys-52–Cys-66, Cys-59–Cys-70, and Cys-65–Cys-79.

It belongs to the conotoxin O1 superfamily. Peptide predicted to begin at Arg-51, but it seems more probable that it begins at Cys-52, since this position corresponds to a dibasic residue cleavage. As to expression, expressed by the venom duct.

The protein localises to the secreted. Omega-conotoxins act at presynaptic membranes, they bind and block voltage-gated calcium channels (Cav). The sequence is that of Omega-conotoxin-like 1 from Conus capitaneus (Captain cone).